A 458-amino-acid polypeptide reads, in one-letter code: Argininosuccinate lyase (458 aa).

This sequence belongs to the lyase 1 family. Argininosuccinate lyase subfamily.

It is found in the cytoplasm. The catalysed reaction is 2-(N(omega)-L-arginino)succinate = fumarate + L-arginine. It participates in amino-acid biosynthesis; L-arginine biosynthesis; L-arginine from L-ornithine and carbamoyl phosphate: step 3/3. This Acetivibrio thermocellus (strain ATCC 27405 / DSM 1237 / JCM 9322 / NBRC 103400 / NCIMB 10682 / NRRL B-4536 / VPI 7372) (Clostridium thermocellum) protein is Argininosuccinate lyase.